The following is a 453-amino-acid chain: Trigger factor (453 aa).

The 86-residue stretch at 171-256 (GDRVTISFKG…ATVLEAPQES (86 aa)) folds into the PPIase FKBP-type domain.

The protein belongs to the FKBP-type PPIase family. Tig subfamily.

The protein localises to the cytoplasm. It carries out the reaction [protein]-peptidylproline (omega=180) = [protein]-peptidylproline (omega=0). Involved in protein export. Acts as a chaperone by maintaining the newly synthesized protein in an open conformation. Functions as a peptidyl-prolyl cis-trans isomerase. The sequence is that of Trigger factor from Rhodopseudomonas palustris (strain BisB18).